Reading from the N-terminus, the 457-residue chain is tRNA-2-methylthio-N(6)-dimethylallyladenosine synthase (457 aa).

The MTTase N-terminal domain occupies 8–123; the sequence is KKVFIKTFGC…LPEMLARRDA (116 aa). [4Fe-4S] cluster-binding residues include Cys17, Cys54, Cys86, Cys160, Cys164, and Cys167. A Radical SAM core domain is found at 146 to 379; it reads RVDGATAFVS…QEAIEANGRR (234 aa). The TRAM domain occupies 382–449; sequence QSRVGTVQRI…PHSLRGEVLL (68 aa).

The protein belongs to the methylthiotransferase family. MiaB subfamily. Monomer. [4Fe-4S] cluster is required as a cofactor.

It localises to the cytoplasm. It catalyses the reaction N(6)-dimethylallyladenosine(37) in tRNA + (sulfur carrier)-SH + AH2 + 2 S-adenosyl-L-methionine = 2-methylsulfanyl-N(6)-dimethylallyladenosine(37) in tRNA + (sulfur carrier)-H + 5'-deoxyadenosine + L-methionine + A + S-adenosyl-L-homocysteine + 2 H(+). In terms of biological role, catalyzes the methylthiolation of N6-(dimethylallyl)adenosine (i(6)A), leading to the formation of 2-methylthio-N6-(dimethylallyl)adenosine (ms(2)i(6)A) at position 37 in tRNAs that read codons beginning with uridine. The polypeptide is tRNA-2-methylthio-N(6)-dimethylallyladenosine synthase (Methylibium petroleiphilum (strain ATCC BAA-1232 / LMG 22953 / PM1)).